Reading from the N-terminus, the 139-residue chain is FAD synthase (139 aa).

Residues 9–10 (TF), 14–17 (HPGH), and Asn-92 contribute to the ATP site.

The protein belongs to the archaeal FAD synthase family. As to quaternary structure, homodimer. A divalent metal cation serves as cofactor.

The enzyme catalyses FMN + ATP + H(+) = FAD + diphosphate. It functions in the pathway cofactor biosynthesis; FAD biosynthesis; FAD from FMN: step 1/1. Its function is as follows. Catalyzes the transfer of the AMP portion of ATP to flavin mononucleotide (FMN) to produce flavin adenine dinucleotide (FAD) coenzyme. In Methanocella paludicola (strain DSM 17711 / JCM 13418 / NBRC 101707 / SANAE), this protein is FAD synthase.